Here is a 101-residue protein sequence, read N- to C-terminus: Urease subunit beta (101 aa).

It belongs to the urease beta subunit family. Heterotrimer of UreA (gamma), UreB (beta) and UreC (alpha) subunits. Three heterotrimers associate to form the active enzyme.

It localises to the cytoplasm. It carries out the reaction urea + 2 H2O + H(+) = hydrogencarbonate + 2 NH4(+). It participates in nitrogen metabolism; urea degradation; CO(2) and NH(3) from urea (urease route): step 1/1. This Bradyrhizobium diazoefficiens (strain JCM 10833 / BCRC 13528 / IAM 13628 / NBRC 14792 / USDA 110) protein is Urease subunit beta.